The primary structure comprises 74 residues: Tetrahydromethanopterin S-methyltransferase subunit G (74 aa).

Residues 47–67 form a helical membrane-spanning segment; that stretch reads VGIAYGLAIGFIFVYVLGTVL.

It belongs to the MtrG family. In terms of assembly, the complex is composed of 8 subunits; MtrA, MtrB, MtrC, MtrD, MtrE, MtrF, MtrG and MtrH.

It is found in the cell membrane. It carries out the reaction 5-methyl-5,6,7,8-tetrahydromethanopterin + coenzyme M + 2 Na(+)(in) = 5,6,7,8-tetrahydromethanopterin + methyl-coenzyme M + 2 Na(+)(out). It participates in one-carbon metabolism; methanogenesis from CO(2); methyl-coenzyme M from 5,10-methylene-5,6,7,8-tetrahydromethanopterin: step 2/2. Its function is as follows. Part of a complex that catalyzes the formation of methyl-coenzyme M and tetrahydromethanopterin from coenzyme M and methyl-tetrahydromethanopterin. This is an energy-conserving, sodium-ion translocating step. The sequence is that of Tetrahydromethanopterin S-methyltransferase subunit G from Methanococcus maripaludis (strain DSM 14266 / JCM 13030 / NBRC 101832 / S2 / LL).